The chain runs to 362 residues: Anthranilate phosphoribosyltransferase (362 aa).

Residues glycine 96, 99–100 (GD), threonine 104, 106–109 (NIST), 124–132 (KHGNRAASS), and glycine 136 each bind 5-phospho-alpha-D-ribose 1-diphosphate. Glycine 96 is an anthranilate binding site. Mg(2+) is bound at residue serine 108. Asparagine 127 is an anthranilate binding site. Arginine 182 serves as a coordination point for anthranilate. Residues aspartate 240 and glutamate 241 each coordinate Mg(2+).

This sequence belongs to the anthranilate phosphoribosyltransferase family. As to quaternary structure, homodimer. The cofactor is Mg(2+).

It carries out the reaction N-(5-phospho-beta-D-ribosyl)anthranilate + diphosphate = 5-phospho-alpha-D-ribose 1-diphosphate + anthranilate. It functions in the pathway amino-acid biosynthesis; L-tryptophan biosynthesis; L-tryptophan from chorismate: step 2/5. Catalyzes the transfer of the phosphoribosyl group of 5-phosphorylribose-1-pyrophosphate (PRPP) to anthranilate to yield N-(5'-phosphoribosyl)-anthranilate (PRA). The sequence is that of Anthranilate phosphoribosyltransferase from Rhodococcus jostii (strain RHA1).